The following is a 127-amino-acid chain: Small ribosomal subunit protein uS11 (127 aa).

The protein belongs to the universal ribosomal protein uS11 family. As to quaternary structure, part of the 30S ribosomal subunit. Interacts with proteins S7 and S18. Binds to IF-3.

Its function is as follows. Located on the platform of the 30S subunit, it bridges several disparate RNA helices of the 16S rRNA. Forms part of the Shine-Dalgarno cleft in the 70S ribosome. The chain is Small ribosomal subunit protein uS11 from Flavobacterium johnsoniae (strain ATCC 17061 / DSM 2064 / JCM 8514 / BCRC 14874 / CCUG 350202 / NBRC 14942 / NCIMB 11054 / UW101) (Cytophaga johnsonae).